We begin with the raw amino-acid sequence, 1208 residues long: Spindle pole body protein pcp1 (1208 aa).

Residues 1-17 (MSERDFNTQSPKFKDEN) are compositionally biased toward basic and acidic residues. The disordered stretch occupies residues 1 to 91 (MSERDFNTQS…DKYNGSLGDK (91 aa)). A compositionally biased stretch (polar residues) spans 48–64 (NDKSSFQTPLRNGSYQP). Coiled-coil stretches lie at residues 151–375 (LREQ…KENQ), 387–803 (TDSM…ANIE), 874–1091 (GTET…QSTQ), and 1177–1204 (ERMK…AKAK). Ser-906 bears the Phosphoserine mark.

As to quaternary structure, interacts with ccq1.

The protein localises to the nucleus. Its subcellular location is the cytoplasm. It is found in the cytoskeleton. The protein resides in the microtubule organizing center. It localises to the spindle pole body. Its function is as follows. Spindle pole body component that binds calmodulin. Overexpression of pcp1 causes the formation of supernumerary SPB-like structures and disrupts both mitotic spindle assembly and chromosome segregation. The polypeptide is Spindle pole body protein pcp1 (pcp1) (Schizosaccharomyces pombe (strain 972 / ATCC 24843) (Fission yeast)).